The following is a 116-amino-acid chain: Ly-6/neurotoxin-like protein 1 (116 aa).

Positions 1–20 are cleaved as a signal peptide; sequence MTHLLTVFLVALMGLPVAQA. The UPAR/Ly6 domain occupies 21-104; that stretch reads LECHVCAYNG…GFATPVTLAL (84 aa). Intrachain disulfides connect Cys23-Cys46, Cys26-Cys33, Cys39-Cys64, Cys68-Cys85, and Cys86-Cys91. Residue Asn92 is the site of GPI-anchor amidated asparagine attachment. A propeptide spans 93-116 (removed in mature form); the sequence is GAGFATPVTLALVPALLATFWSLL.

In terms of assembly, interacts with nAChRs containing alpha-4:beta-2 (CHRNA4:CHRNB2) and alpha-7 (CHRNA7) subunits. Interacts with CHRNA4 probably in the endoplasmic reticulum prior to nAChR pentameric assembly. Interacts with KCNA2/Potassium voltage-gated channel subfamily A member 2. In terms of tissue distribution, expressed in neurons of multiple regions in the CNS, including the cerebral cortex, thalamus, substantia nigra, cerebellum, amygdala and hippocampus. Also expressed in kidney, heart and thymus, but at lower levels than in the brain. Expressed in the primary visual cortex (V1) and the lateral geniculate nucleus (at protein level).

The protein localises to the cell membrane. The protein resides in the cell projection. It is found in the dendrite. It localises to the endoplasmic reticulum. Acts in different tissues through interaction to nicotinic acetylcholine receptors (nAChRs). The proposed role as modulator of nAChR activity seems to be dependent on the nAChR subtype and stoichiometry, and to involve an effect on nAChR trafficking and its cell surface expression, and on single channel properties of the nAChR inserted in the plasma membrane. Modulates functional properties of nicotinic acetylcholine receptors (nAChRs) to prevent excessive excitation, and hence neurodegeneration. Enhances desensitization by increasing both the rate and extent of desensitization of alpha-4:beta-2-containing nAChRs and slowing recovery from desensitization. Promotes large amplitude ACh-evoked currents through alpha-4:beta-2 nAChRs. Is involved in regulation of the nAChR pentameric assembly in the endoplasmic reticulum. Shifts stoichiometry from high sensitivity alpha-4(2):beta-2(3) to low sensitivity alpha-4(3):beta-2(2) nAChR. In vitro modulates alpha-3:beta-4-containing nAChRs. Reduces cell surface expression of (alpha-3:beta-4)(2):beta-4 and (alpha-3:beta-4)(2):alpha-5 nAChRs suggesting an interaction with nAChR alpha-3(-):(+)beta-4 subunit interfaces and an allosteric mode. Corresponding single channel effects characterized by decreased unitary conductance, altered burst proportions and enhanced desensitization/inactivation seem to depend on nAChR alpha:alpha subunit interfaces and are greater in (alpha-3:beta-2)(2):alpha-3 when compared to (alpha-3:beta-2)(2):alpha-5 nAChRs. Prevents plasticity in the primary visual cortex late in life. In Mus musculus (Mouse), this protein is Ly-6/neurotoxin-like protein 1.